The primary structure comprises 247 residues: E3 SUMO-protein ligase NSE2 (247 aa).

Met1 carries the post-translational modification N-acetylmethionine. Residues Lys90 and Lys107 each participate in a glycyl lysine isopeptide (Lys-Gly) (interchain with G-Cter in SUMO2) cross-link. Ser116 carries the post-translational modification Phosphoserine. Glycyl lysine isopeptide (Lys-Gly) (interchain with G-Cter in SUMO2) cross-links involve residues Lys125 and Lys130. The SP-RING-type zinc finger occupies 154-240; that stretch reads VDEDMIVTQS…LRRAIESHNK (87 aa). Residues Cys185, His187, Cys210, and Cys215 each coordinate Zn(2+).

Belongs to the NSE2 family. Component of the SMC5-SMC6 complex which consists at least of SMC5, SMC6, NSMCE2, NSMCE1, NSMCE4A or EID3 and NSMCE3. In terms of processing, sumoylated, possibly via autosumoylation.

Its subcellular location is the nucleus. The protein localises to the chromosome. The protein resides in the telomere. It is found in the PML body. It participates in protein modification; protein sumoylation. Functionally, E3 SUMO-protein ligase component of the SMC5-SMC6 complex, a complex involved in DNA double-strand break repair by homologous recombination. Is not be required for the stability of the complex. The complex may promote sister chromatid homologous recombination by recruiting the SMC1-SMC3 cohesin complex to double-strand breaks. Acts as an E3 ligase mediating SUMO attachment to various proteins such as SMC6L1 and TSNAX, the shelterin complex subunits TERF1, TERF2, TINF2 and TERF2IP, RAD51AP1, and maybe the cohesin components RAD21 and STAG2. Required for recruitment of telomeres to PML nuclear bodies. Required for sister chromatid cohesion during prometaphase and mitotic progression. This Mus musculus (Mouse) protein is E3 SUMO-protein ligase NSE2 (Nsmce2).